We begin with the raw amino-acid sequence, 213 residues long: rRNA N(6)-adenosine-methyltransferase Mettl5 (213 aa).

Residues Gln-28, Thr-31, Gly-59, Cys-62, and 108–109 (DV) contribute to the S-adenosyl-L-methionine site.

Belongs to the methyltransferase superfamily. PrmA family. In terms of assembly, heterodimer; heterodimerizes with Trmt112. As to expression, enriched in the brain.

The protein localises to the cytoplasm. It catalyses the reaction adenosine in rRNA + S-adenosyl-L-methionine = N(6)-methyladenosine in rRNA + S-adenosyl-L-homocysteine + H(+). Catalytic subunit of a heterodimer with Trmt112, which specifically methylates the 6th position of adenine in 18S rRNA. The chain is rRNA N(6)-adenosine-methyltransferase Mettl5 from Drosophila melanogaster (Fruit fly).